The sequence spans 763 residues: Nibrin (763 aa).

Residues 22–81 form the FHA domain; sequence YVVGRKNCAILIPEDQSISRCHATLSVSHPSANLGQTNAASVLSIKDSSKYGTTVNGDKM. BRCT domains are found at residues 102–179 and 215–324; these read SKYR…CELL and KRKS…NPRR. Disordered regions lie at residues 389–496, 535–593, and 738–763; these read VKET…SSQT, SKAA…SEIE, and QTQQ…KRRR. Residues 423-433 are compositionally biased toward basic and acidic residues; it reads LFREDETDTRK. The segment covering 434–443 has biased composition (polar residues); the sequence is NTPSLLPTKS. The Nuclear localization signal motif lies at 469–474; it reads AKKRDR. The segment covering 473-482 has biased composition (basic and acidic residues); it reads DRAEDEKEAS. Over residues 742–752 the composition is skewed to basic and acidic residues; that stretch reads VREESLAEDLF. The short motif at 748–757 is the FxF/Y motif element; the sequence is AEDLFRYNPK.

It belongs to the Nibrin family. Component of the MRN complex composed of two heterodimers rad50 and mre11 associated with a single nbn.

The protein localises to the nucleus. Its subcellular location is the chromosome. It is found in the PML body. It localises to the telomere. Functionally, component of the MRN complex, which plays a central role in double-strand break (DSB) repair, DNA recombination, maintenance of telomere integrity and meiosis. The MRN complex is involved in the repair of DNA double-strand breaks (DSBs) via homologous recombination (HR), an error-free mechanism which primarily occurs during S and G2 phases. The complex (1) mediates the end resection of damaged DNA, which generates proper single-stranded DNA, a key initial steps in HR, and is (2) required for the recruitment of other repair factors and efficient activation of ATM and ATR upon DNA damage. The MRN complex possesses single-strand endonuclease activity and double-strand-specific 3'-5' exonuclease activity, which are provided by MRE11, to initiate end resection, which is required for single-strand invasion and recombination. Within the MRN complex, nbn acts as a protein-protein adapter, which specifically recognizes and binds phosphorylated proteins, promoting their recruitment to DNA damage sites. Recruits mre11 and rad50 components of the MRN complex to DSBs in response to DNA damage. Promotes the recruitment of PI3/PI4-kinase family members atm, atr, and probably DNA-PKcs to the DNA damage sites, activating their functions. Mediates the recruitment of phosphorylated rbbp8/CtIP to DSBs, leading to cooperation between the MRN complex and rbbp8/CtIP to initiate end resection. The MRN complex promotes recruitment of topbp1 to DNA damage sites. The MRN complex and rbbp8/CtIP are also required for chromosome alignment during metaphase. The sequence is that of Nibrin from Xenopus laevis (African clawed frog).